Reading from the N-terminus, the 347-residue chain is D-alanine--D-alanine ligase (347 aa).

The region spanning 138–339 is the ATP-grasp domain; that stretch reads KILCSHAGIP…YSQVIETILA (202 aa). 171–226 provides a ligand contact to ATP; that stretch reads SDRFTFPLFVKPVDAGSSFGCTFVDFFEQLPVAIEHALQHGKSAIVEPALDAPEVF. Mg(2+) is bound by residues Asp-296, Glu-308, and Asn-310.

Belongs to the D-alanine--D-alanine ligase family. Mg(2+) serves as cofactor. Mn(2+) is required as a cofactor.

Its subcellular location is the cytoplasm. The catalysed reaction is 2 D-alanine + ATP = D-alanyl-D-alanine + ADP + phosphate + H(+). The protein operates within cell wall biogenesis; peptidoglycan biosynthesis. Functionally, cell wall formation. In Tropheryma whipplei (strain Twist) (Whipple's bacillus), this protein is D-alanine--D-alanine ligase.